Consider the following 226-residue polypeptide: UPF0758 protein SGO_1229 (226 aa).

The region spanning 103–225 is the MPN domain; it reads RILSSQKLAK…YYSYREETDL (123 aa). Zn(2+) contacts are provided by H174, H176, and D187. The JAMM motif motif lies at 174–187; the sequence is HNHPSGATRPSRDD.

This sequence belongs to the UPF0758 family.

This Streptococcus gordonii (strain Challis / ATCC 35105 / BCRC 15272 / CH1 / DL1 / V288) protein is UPF0758 protein SGO_1229.